The sequence spans 466 residues: Asparagine--tRNA ligase (466 aa).

This sequence belongs to the class-II aminoacyl-tRNA synthetase family. Homodimer.

It is found in the cytoplasm. The catalysed reaction is tRNA(Asn) + L-asparagine + ATP = L-asparaginyl-tRNA(Asn) + AMP + diphosphate + H(+). The protein is Asparagine--tRNA ligase of Shewanella halifaxensis (strain HAW-EB4).